The sequence spans 248 residues: 2,3-bisphosphoglycerate-dependent phosphoglycerate mutase (248 aa).

Substrate-binding positions include 8-15, 21-22, Arg60, 87-90, Lys98, 114-115, and 183-184; these read RHGESTWN, TG, EKHY, RR, and GN. His9 serves as the catalytic Tele-phosphohistidine intermediate. Residue Glu87 is the Proton donor/acceptor of the active site.

Belongs to the phosphoglycerate mutase family. BPG-dependent PGAM subfamily.

The catalysed reaction is (2R)-2-phosphoglycerate = (2R)-3-phosphoglycerate. Its pathway is carbohydrate degradation; glycolysis; pyruvate from D-glyceraldehyde 3-phosphate: step 3/5. Functionally, catalyzes the interconversion of 2-phosphoglycerate and 3-phosphoglycerate. This chain is 2,3-bisphosphoglycerate-dependent phosphoglycerate mutase, found in Elusimicrobium minutum (strain Pei191).